Here is a 303-residue protein sequence, read N- to C-terminus: Signal recognition particle receptor FtsY (303 aa).

GTP is bound by residues 108 to 115, 190 to 194, and 254 to 257; these read GVNGAGKT, DTAGR, and TKLD.

It belongs to the GTP-binding SRP family. FtsY subfamily. In terms of assembly, part of the signal recognition particle protein translocation system, which is composed of SRP and FtsY. SRP is a ribonucleoprotein composed of Ffh and a 4.5S RNA molecule.

Its subcellular location is the cell inner membrane. It localises to the cytoplasm. The enzyme catalyses GTP + H2O = GDP + phosphate + H(+). Its function is as follows. Involved in targeting and insertion of nascent membrane proteins into the cytoplasmic membrane. Acts as a receptor for the complex formed by the signal recognition particle (SRP) and the ribosome-nascent chain (RNC). Interaction with SRP-RNC leads to the transfer of the RNC complex to the Sec translocase for insertion into the membrane, the hydrolysis of GTP by both Ffh and FtsY, and the dissociation of the SRP-FtsY complex into the individual components. In Rickettsia felis (strain ATCC VR-1525 / URRWXCal2) (Rickettsia azadi), this protein is Signal recognition particle receptor FtsY.